A 545-amino-acid polypeptide reads, in one-letter code: Lysine--tRNA ligase (545 aa).

The 'HIGH' region signature appears at 42 to 50 (PSGVPHIGH). The 'KMSKS' region motif lies at 307 to 311 (PLSSS).

Belongs to the class-I aminoacyl-tRNA synthetase family.

It localises to the cytoplasm. It carries out the reaction tRNA(Lys) + L-lysine + ATP = L-lysyl-tRNA(Lys) + AMP + diphosphate. The chain is Lysine--tRNA ligase from Haloarcula marismortui (strain ATCC 43049 / DSM 3752 / JCM 8966 / VKM B-1809) (Halobacterium marismortui).